Reading from the N-terminus, the 377-residue chain is Copper-containing nitrite reductase (377 aa).

The segment at residues 1–35 is a signal peptide (tat-type signal); the sequence is MTNTLQMTRRTMLTGAAVAGALTPILTSGGGNASP. Plastocyanin-like domains lie at 99–194 and 259–360; these read MTFD…IMVL and GAVG…FKVT. Residues H132, H137, H172, C173, H182, M187, and H343 each contribute to the Cu cation site.

Belongs to the multicopper oxidase family. Homotrimer. The cofactor is Cu(2+). It depends on Cu(+) as a cofactor. Requires FAD as cofactor. Predicted to be exported by the Tat system. The position of the signal peptide cleavage has not been experimentally proven.

It is found in the periplasm. It catalyses the reaction nitric oxide + Fe(III)-[cytochrome c] + H2O = Fe(II)-[cytochrome c] + nitrite + 2 H(+). It functions in the pathway nitrogen metabolism; nitrate reduction (denitrification); dinitrogen from nitrate: step 2/4. In Rhizobium sullae (Rhizobium hedysari), this protein is Copper-containing nitrite reductase (nirK).